The following is a 178-amino-acid chain: Large ribosomal subunit protein bL25 (178 aa).

The protein belongs to the bacterial ribosomal protein bL25 family. CTC subfamily. Part of the 50S ribosomal subunit; part of the 5S rRNA/L5/L18/L25 subcomplex. Contacts the 5S rRNA. Binds to the 5S rRNA independently of L5 and L18.

This is one of the proteins that binds to the 5S RNA in the ribosome where it forms part of the central protuberance. The polypeptide is Large ribosomal subunit protein bL25 (Campylobacter hominis (strain ATCC BAA-381 / DSM 21671 / CCUG 45161 / LMG 19568 / NCTC 13146 / CH001A)).